The primary structure comprises 454 residues: Metalloprotease MTH_856 (454 aa).

The segment at 92–115 (QVGSGAPSVDKTMVRSSRPPSDVP) is disordered.

Belongs to the peptidase U62 family.

Functionally, probable metalloprotease. The sequence is that of Metalloprotease MTH_856 from Methanothermobacter thermautotrophicus (strain ATCC 29096 / DSM 1053 / JCM 10044 / NBRC 100330 / Delta H) (Methanobacterium thermoautotrophicum).